Here is a 160-residue protein sequence, read N- to C-terminus: Transcription elongation factor GreA (160 aa).

The stretch at 1–71 (MAEKTYPMTL…GQISTLETKI (71 aa)) forms a coiled coil.

It belongs to the GreA/GreB family.

Its function is as follows. Necessary for efficient RNA polymerase transcription elongation past template-encoded arresting sites. The arresting sites in DNA have the property of trapping a certain fraction of elongating RNA polymerases that pass through, resulting in locked ternary complexes. Cleavage of the nascent transcript by cleavage factors such as GreA or GreB allows the resumption of elongation from the new 3'terminus. GreA releases sequences of 2 to 3 nucleotides. The sequence is that of Transcription elongation factor GreA from Streptococcus pyogenes serotype M3 (strain ATCC BAA-595 / MGAS315).